Consider the following 301-residue polypeptide: Immediate early response gene 5-like protein (301 aa).

The protein belongs to the IER family.

The polypeptide is Immediate early response gene 5-like protein (ier5l) (Danio rerio (Zebrafish)).